A 156-amino-acid chain; its full sequence is Ribosomal RNA large subunit methyltransferase H (156 aa).

S-adenosyl-L-methionine contacts are provided by residues Leu-73, Gly-104, and 123-128; that span reads LSALTL.

It belongs to the RNA methyltransferase RlmH family. Homodimer.

It localises to the cytoplasm. The catalysed reaction is pseudouridine(1915) in 23S rRNA + S-adenosyl-L-methionine = N(3)-methylpseudouridine(1915) in 23S rRNA + S-adenosyl-L-homocysteine + H(+). Its function is as follows. Specifically methylates the pseudouridine at position 1915 (m3Psi1915) in 23S rRNA. The protein is Ribosomal RNA large subunit methyltransferase H of Shewanella oneidensis (strain ATCC 700550 / JCM 31522 / CIP 106686 / LMG 19005 / NCIMB 14063 / MR-1).